Consider the following 346-residue polypeptide: Phosphate acyltransferase (346 aa).

Belongs to the PlsX family. In terms of assembly, homodimer. Probably interacts with PlsY.

The protein localises to the cytoplasm. The catalysed reaction is a fatty acyl-[ACP] + phosphate = an acyl phosphate + holo-[ACP]. Its pathway is lipid metabolism; phospholipid metabolism. Its function is as follows. Catalyzes the reversible formation of acyl-phosphate (acyl-PO(4)) from acyl-[acyl-carrier-protein] (acyl-ACP). This enzyme utilizes acyl-ACP as fatty acyl donor, but not acyl-CoA. This chain is Phosphate acyltransferase, found in Brucella suis biovar 1 (strain 1330).